Here is a 261-residue protein sequence, read N- to C-terminus: Carnitinyl-CoA dehydratase (261 aa).

The active-site Nucleophile is glutamate 111. Glutamate 131 functions as the Proton acceptor in the catalytic mechanism.

This sequence belongs to the enoyl-CoA hydratase/isomerase family.

It catalyses the reaction (R)-carnitinyl-CoA = crotonobetainyl-CoA + H2O. It participates in amine and polyamine metabolism; carnitine metabolism. In terms of biological role, catalyzes the reversible dehydration of L-carnitinyl-CoA to crotonobetainyl-CoA. This Escherichia coli (strain SMS-3-5 / SECEC) protein is Carnitinyl-CoA dehydratase.